A 626-amino-acid polypeptide reads, in one-letter code: Pheromone B alpha 3 receptor (626 aa).

7 helical membrane-spanning segments follow: residues 8 to 28 (LFPT…PWHL), 36 to 56 (CFFM…SIVW), 70 to 90 (ISIR…LCII), 113 to 133 (IIID…MQYI), 163 to 183 (IWPV…LIEF), 208 to 228 (LMAL…FVIV), and 271 to 291 (ELTR…FGFA). 4 disordered regions span residues 363–409 (KQYT…SSPI), 481–509 (ATFT…SSSA), 524–549 (STTD…RLPS), and 571–626 (QDVA…RASV). The span at 376–391 (SSSGFSSSESTRFGSS) shows a compositional bias: low complexity. A compositionally biased stretch (low complexity) spans 574–606 (ATGTAAPTTTAPAPASTTIAPATTTATAPTTTA).

Belongs to the G-protein coupled receptor 4 family.

The protein localises to the membrane. In terms of biological role, receptor for the BAP3 pheromone, a prenylated mating factor. The protein is Pheromone B alpha 3 receptor (BAR3) of Schizophyllum commune (strain H4-8 / FGSC 9210) (Split gill fungus).